The sequence spans 481 residues: Heat stress transcription factor A-1b (481 aa).

Over residues 1–16 (MESVPESVPSPNSNTP) the composition is skewed to low complexity. The disordered stretch occupies residues 1–23 (MESVPESVPSPNSNTPSIPPPVN). Residues 25 to 119 (VPPFLSKTYD…LLKSIVRRKP (95 aa)) mediate DNA binding. The interval 138 to 204 (ACVEVGKFGI…QMMSFLAKAV (67 aa)) is hydrophobic repeat HR-A/B. Residues 213–227 (LVQQNNNDGNRQIPG) are compositionally biased toward polar residues. The segment at 213–244 (LVQQNNNDGNRQIPGSNKKRRLPVDEQENRGD) is disordered. The short motif at 229–233 (NKKRR) is the Nuclear localization signal element. The span at 234–243 (LPVDEQENRG) shows a compositional bias: basic and acidic residues. The AHA motif lies at 418 to 427 (DPFWEQFFSV). Residues 467-474 (LTEQMGLL) carry the Nuclear export signal motif.

It belongs to the HSF family. Class A subfamily. As to quaternary structure, homotrimer. Binds to HSBP. Post-translationally, exhibits temperature-dependent phosphorylation.

The protein localises to the cytoplasm. It localises to the nucleus. Its function is as follows. Transcriptional activator that specifically binds DNA sequence 5'-AGAAnnTTCT-3' known as heat shock promoter elements (HSE). This is Heat stress transcription factor A-1b (HSFA1B) from Arabidopsis thaliana (Mouse-ear cress).